A 257-amino-acid polypeptide reads, in one-letter code: tRNA-cytidine(32) 2-sulfurtransferase (257 aa).

A PP-loop motif motif is present at residues 37 to 42; it reads SGGKDS. [4Fe-4S] cluster contacts are provided by Cys-112, Cys-115, and Cys-202.

This sequence belongs to the TtcA family. Homodimer. Mg(2+) is required as a cofactor. Requires [4Fe-4S] cluster as cofactor.

Its subcellular location is the cytoplasm. It catalyses the reaction cytidine(32) in tRNA + S-sulfanyl-L-cysteinyl-[cysteine desulfurase] + AH2 + ATP = 2-thiocytidine(32) in tRNA + L-cysteinyl-[cysteine desulfurase] + A + AMP + diphosphate + H(+). It functions in the pathway tRNA modification. Its function is as follows. Catalyzes the ATP-dependent 2-thiolation of cytidine in position 32 of tRNA, to form 2-thiocytidine (s(2)C32). The sulfur atoms are provided by the cysteine/cysteine desulfurase (IscS) system. The sequence is that of tRNA-cytidine(32) 2-sulfurtransferase from Geobacter sulfurreducens (strain ATCC 51573 / DSM 12127 / PCA).